The following is a 1091-amino-acid chain: Ubiquitin carboxyl-terminal hydrolase 36 (1091 aa).

Residues 115–152 are disordered; the sequence is ANGHDNNGRKLSDHPNQNHNHANPNGHHANPNELPKPK. Residues 128–146 are compositionally biased toward low complexity; that stretch reads HPNQNHNHANPNGHHANPN. Positions 176 to 484 constitute a USP domain; sequence SGMINAGNTC…NAYIMFYELD (309 aa). Cys-185 functions as the Nucleophile in the catalytic mechanism. The active-site Proton acceptor is His-443. Ser-518 and Ser-522 each carry phosphoserine. Disordered stretches follow at residues 523 to 572, 594 to 892, 972 to 1007, and 1068 to 1091; these read PAKF…KSPL, PTAN…ELLK, QRDL…GYNP, and LAAG…QQQS. The segment covering 547–572 has biased composition (polar residues); sequence TTIQFKPQHQPSHQQNGVQQSAKSPL. A compositionally biased stretch (low complexity) spans 594 to 612; that stretch reads PTANGNKSSSNHSNHKSVN. Positions 643–652 are enriched in basic and acidic residues; it reads KMDDCMDSGK. The segment covering 653-667 has biased composition (low complexity); the sequence is PKSPVKTPVKTPLKS. Phosphothreonine occurs at positions 659 and 663. Residues Ser-673 and Ser-675 each carry the phosphoserine modification. Residues 691–702 show a composition bias toward basic and acidic residues; sequence RSSDSSDSEHEP. Residues 703–727 show a composition bias toward polar residues; the sequence is TTSSVQLNGHSKTNGSLSNGSSKST. The residue at position 749 (Ser-749) is a Phosphoserine. The span at 749–759 shows a compositional bias: acidic residues; the sequence is SEDDDDDEDEP. Low complexity predominate over residues 769-780; it reads PQKQSQSQSRSG. A compositionally biased stretch (pro residues) spans 781–790; it reads PPSPKTPPSP. The residue at position 783 (Ser-783) is a Phosphoserine. At Thr-786 the chain carries Phosphothreonine. Phosphoserine is present on Ser-789. The span at 806 to 821 shows a compositional bias: acidic residues; that stretch reads DGDDDEDDDDDDDEVV. Thr-829 carries the phosphothreonine modification. Polar residues-rich tracts occupy residues 838–850 and 863–886; these read FASS…SPTT and AIKT…NGGT. Ser-847 carries the post-translational modification Phosphoserine. Thr-850 bears the Phosphothreonine mark.

The protein belongs to the peptidase C19 family. In terms of assembly, interacts with atms/PAF1, but not with CycT.

It is found in the nucleus. The protein resides in the nucleolus. The catalysed reaction is Thiol-dependent hydrolysis of ester, thioester, amide, peptide and isopeptide bonds formed by the C-terminal Gly of ubiquitin (a 76-residue protein attached to proteins as an intracellular targeting signal).. In terms of biological role, required for maintaining multiple types of adult stem cells, including male and female germline, epithelial follicle cell and intestinal stem cells. May function as a transcriptional repressor by continually deubiquiting histone H2B at the promoters of genes critical for cellular differentiation, thereby preventing histone H3 'Lys-4' trimethylation (H3K4). Controls selective autophagy activation by ubiquitinated proteins. This Drosophila ananassae (Fruit fly) protein is Ubiquitin carboxyl-terminal hydrolase 36 (Usp36).